A 115-amino-acid chain; its full sequence is NADH-ubiquinone oxidoreductase chain 3 (115 aa).

3 helical membrane-spanning segments follow: residues 3-23 (LVMA…IAFW), 55-75 (FFLV…LLPL), and 86-106 (TMLI…AYEW).

Belongs to the complex I subunit 3 family. As to quaternary structure, core subunit of respiratory chain NADH dehydrogenase (Complex I) which is composed of 45 different subunits. Interacts with TMEM186. Interacts with TMEM242.

Its subcellular location is the mitochondrion inner membrane. The enzyme catalyses a ubiquinone + NADH + 5 H(+)(in) = a ubiquinol + NAD(+) + 4 H(+)(out). Functionally, core subunit of the mitochondrial membrane respiratory chain NADH dehydrogenase (Complex I) which catalyzes electron transfer from NADH through the respiratory chain, using ubiquinone as an electron acceptor. Essential for the catalytic activity of complex I. This is NADH-ubiquinone oxidoreductase chain 3 from Hippopotamus amphibius (Hippopotamus).